The chain runs to 172 residues: 3-phenylpropionate/cinnamic acid dioxygenase subunit beta (172 aa).

It belongs to the bacterial ring-hydroxylating dioxygenase beta subunit family. As to quaternary structure, this dioxygenase system consists of four proteins: the two subunits of the hydroxylase component (HcaE and HcaF), a ferredoxin (HcaC) and a ferredoxin reductase (HcaD).

The enzyme catalyses 3-phenylpropanoate + NADH + O2 + H(+) = 3-(cis-5,6-dihydroxycyclohexa-1,3-dien-1-yl)propanoate + NAD(+). The catalysed reaction is (E)-cinnamate + NADH + O2 + H(+) = (2E)-3-(cis-5,6-dihydroxycyclohexa-1,3-dien-1-yl)prop-2-enoate + NAD(+). It functions in the pathway aromatic compound metabolism; 3-phenylpropanoate degradation. In terms of biological role, part of the multicomponent 3-phenylpropionate dioxygenase. Converts 3-phenylpropionic acid (PP) and cinnamic acid (CI) into 3-phenylpropionate-dihydrodiol (PP-dihydrodiol) and cinnamic acid-dihydrodiol (CI-dihydrodiol), respectively. The sequence is that of 3-phenylpropionate/cinnamic acid dioxygenase subunit beta from Escherichia coli O139:H28 (strain E24377A / ETEC).